A 368-amino-acid polypeptide reads, in one-letter code: Putative alcohol dehydrogenase D (368 aa).

Zn(2+)-binding residues include Cys40, His61, Cys91, Cys94, Cys97, Cys105, and Cys167.

This sequence belongs to the zinc-containing alcohol dehydrogenase family. Requires Zn(2+) as cofactor.

It catalyses the reaction a primary alcohol + NAD(+) = an aldehyde + NADH + H(+). The catalysed reaction is a secondary alcohol + NAD(+) = a ketone + NADH + H(+). Its function is as follows. Required for maintaining the appropriate mycolic acid composition and permeability of the envelope on its exposure to acidic pH. This chain is Putative alcohol dehydrogenase D (adhD), found in Mycobacterium tuberculosis (strain CDC 1551 / Oshkosh).